The sequence spans 408 residues: Argininosuccinate synthase (408 aa).

ATP contacts are provided by residues 10-18 (AYSGGLDTS) and A37. L-citrulline-binding residues include Y90 and S95. G120 is an ATP binding site. Positions 122, 126, and 127 each coordinate L-aspartate. N126 contributes to the L-citrulline binding site. R130, S181, S190, E266, and Y278 together coordinate L-citrulline.

Belongs to the argininosuccinate synthase family. Type 1 subfamily. Homotetramer.

The protein resides in the cytoplasm. It catalyses the reaction L-citrulline + L-aspartate + ATP = 2-(N(omega)-L-arginino)succinate + AMP + diphosphate + H(+). Its pathway is amino-acid biosynthesis; L-arginine biosynthesis; L-arginine from L-ornithine and carbamoyl phosphate: step 2/3. The chain is Argininosuccinate synthase from Chromobacterium violaceum (strain ATCC 12472 / DSM 30191 / JCM 1249 / CCUG 213 / NBRC 12614 / NCIMB 9131 / NCTC 9757 / MK).